Here is a 1023-residue protein sequence, read N- to C-terminus: Hemolysin, chromosomal (1023 aa).

A run of 3 helical transmembrane segments spans residues 237 to 259, 267 to 326, and 364 to 410; these read IGAGLDTVSGILSAISASFILSN, KAAA…LSIA, and DASL…GILE. Residues Lys-563 and Lys-689 are each lipidated (N6-myristoyl lysine). Hemolysin-type calcium-binding repeat units follow at residues 731-748, 749-766, 767-784, 785-802, 815-832, and 833-850; these read FGSKFADIFHGADGDDHI, EGNDGNDRLYGDKGNDTL, SGGNGDDQLYGGDGNDKL, IGGAGNNYLNGGDGDDEL, SGGKGNDKLYGSEGADLL, and DGGEGNDLLKGGYGNDIY. Over residues 747-763 the composition is skewed to basic and acidic residues; that stretch reads HIEGNDGNDRLYGDKGN. Positions 747 to 780 are disordered; sequence HIEGNDGNDRLYGDKGNDTLSGGNGDDQLYGGDG.

The protein belongs to the RTX prokaryotic toxin (TC 1.C.11) family. Post-translationally, myristoylated by HlyC; the toxin only becomes active when modified. Mainly myristoylated, while a minor fraction is acylated with pentadecanoyl (C15:0; 26%) and heptadecanoyl (C17:0; 6%) fatty acyl groups. Fatty acylation is involved in binding to host membranes and promotes the irreversible insertion of Hemolysin into the host cell membrane. Can be activated by both myristoylation and palmitoylation, but HlyC catalyzes lysine myristoylation.

The protein localises to the secreted. It is found in the host cell membrane. Functionally, bacterial hemolysins are exotoxins that attack blood cell membranes and cause cell rupture by forming a pore. The protein is Hemolysin, chromosomal of Escherichia coli.